Reading from the N-terminus, the 308-residue chain is Acetaldehyde dehydrogenase 2 (308 aa).

12-15 is a binding site for NAD(+); it reads SGNI. The active-site Acyl-thioester intermediate is the Cys-127. NAD(+)-binding positions include 162-170 and Asn-281; that span reads SAGPGTRAN.

The protein belongs to the acetaldehyde dehydrogenase family.

It catalyses the reaction acetaldehyde + NAD(+) + CoA = acetyl-CoA + NADH + H(+). This is Acetaldehyde dehydrogenase 2 from Mycobacterium marinum (strain ATCC BAA-535 / M).